A 105-amino-acid chain; its full sequence is ATP synthase subunit c (105 aa).

Transmembrane regions (helical) follow at residues 3–23 (FLAL…GGMG), 32–52 (SILG…IGMG), and 78–98 (VAMA…IIAI).

This sequence belongs to the ATPase C chain family. F-type ATPases have 2 components, F(1) - the catalytic core - and F(0) - the membrane proton channel. F(1) has five subunits: alpha(3), beta(3), gamma(1), delta(1), epsilon(1). F(0) has three main subunits: a(1), b(2) and c(10-14). The alpha and beta chains form an alternating ring which encloses part of the gamma chain. F(1) is attached to F(0) by a central stalk formed by the gamma and epsilon chains, while a peripheral stalk is formed by the delta and b chains.

It is found in the cell inner membrane. Its function is as follows. F(1)F(0) ATP synthase produces ATP from ADP in the presence of a proton or sodium gradient. F-type ATPases consist of two structural domains, F(1) containing the extramembraneous catalytic core and F(0) containing the membrane proton channel, linked together by a central stalk and a peripheral stalk. During catalysis, ATP synthesis in the catalytic domain of F(1) is coupled via a rotary mechanism of the central stalk subunits to proton translocation. In terms of biological role, key component of the F(0) channel; it plays a direct role in translocation across the membrane. A homomeric c-ring of between 10-14 subunits forms the central stalk rotor element with the F(1) delta and epsilon subunits. This Helicobacter pylori (strain P12) protein is ATP synthase subunit c.